A 66-amino-acid chain; its full sequence is KEGYIVNLSTGCKYECYKLGDNDYCLRECKQQYGKGAGGYCYAFGCWCTHLYEQAVVWPLPKKTCT.

Residues 1–66 (KEGYIVNLST…VWPLPKKTCT (66 aa)) form the LCN-type CS-alpha/beta domain. 4 disulfides stabilise this stretch: C12–C65, C16–C41, C25–C46, and C29–C48. T66 carries the post-translational modification Threonine amide.

Belongs to the long (4 C-C) scorpion toxin superfamily. Sodium channel inhibitor family. Beta subfamily. As to expression, expressed by the venom gland.

It localises to the secreted. Its function is as follows. Beta toxins bind voltage-independently at site-4 of sodium channels (Nav) and shift the voltage of activation toward more negative potentials thereby affecting sodium channel activation and promoting spontaneous and repetitive firing. The polypeptide is Beta-toxin Cll1m (Centruroides limpidus (Mexican scorpion)).